Reading from the N-terminus, the 60-residue chain is Protein YmjC (60 aa).

Residues 40 to 60 (HKPYPTNKMQTTSGKKVIQDR) are disordered.

The polypeptide is Protein YmjC (ymjC) (Escherichia coli (strain K12)).